The sequence spans 120 residues: Large ribosomal subunit protein bL20 (120 aa).

The protein belongs to the bacterial ribosomal protein bL20 family.

Its function is as follows. Binds directly to 23S ribosomal RNA and is necessary for the in vitro assembly process of the 50S ribosomal subunit. It is not involved in the protein synthesizing functions of that subunit. The chain is Large ribosomal subunit protein bL20 from Ureaplasma parvum serovar 3 (strain ATCC 27815 / 27 / NCTC 11736).